The sequence spans 164 residues: MSEPAGDVRQNPCGSKACRRLFGPVDSEQLSRDCDALMAGCIQEARERWNFDFVTETPLEGDFAWERVRGLGLPKLYLPTGPRRGRDELGGGRRPGTSPALLQGTAEEDHVDLSLSCTLVPRSGEQAEGSPGGPGDSQGRKRRQTSMTDFYHSKRRLIFSKRKP.

Ser-2 carries the post-translational modification N-acetylserine. Ser-2 participates in a covalent cross-link: Glycyl serine ester (Ser-Gly) (interchain with G-Cter in ubiquitin). The C4-type zinc-finger motif lies at 13-41; it reads CGSKACRRLFGPVDSEQLSRDCDALMAGC. The tract at residues 17 to 24 is required for binding cyclins; sequence ACRRLFGP. The tract at residues 53-58 is required for binding CDKs; the sequence is FVTETP. The tract at residues 76–164 is disordered; it reads LYLPTGPRRG…RRLIFSKRKP (89 aa). Thr-80 carries the post-translational modification Phosphothreonine; by LKB1. The residue at position 114 (Ser-114) is a Phosphoserine; by GSK3-beta. Phosphoserine is present on Ser-130. Positions 140–164 match the PIP-box K+4 motif motif; it reads RKRRQTSMTDFYHSKRRLIFSKRKP. Residues 141 to 156 carry the Nuclear localization signal motif; sequence KRRQTSMTDFYHSKRR. A Phosphothreonine; by PKA, PKB/AKT1, PIM1 and PIM2 modification is found at Thr-145. Ser-146 carries the phosphoserine; by PKC and NUAK1 modification. Residues 152 to 164 form an interaction with TRIM39 region; sequence HSKRRLIFSKRKP. Basic residues predominate over residues 153–164; sequence SKRRLIFSKRKP. Residue Ser-160 is modified to Phosphoserine; by PKC; in vitro.

It belongs to the CDI family. As to quaternary structure, interacts with HDAC1; the interaction is prevented by competitive binding of C10orf90/FATS to HDAC1 facilitating acetylation and protein stabilization of CDKN1A/p21. Interacts with MKRN1. Interacts with PSMA3. Interacts with PCNA. Component of the ternary complex, cyclin D-CDK4-CDKN1A. Interacts (via its N-terminal domain) with CDK4; the interaction promotes the assembly of the cyclin D-CDK4 complex, its nuclear translocation and promotes the cyclin D-dependent enzyme activity of CDK4. Binding to CDK2 leads to CDK2/cyclin E inactivation at the G1-S phase DNA damage checkpoint, thereby arresting cells at the G1-S transition during DNA repair. Interacts with PIM1. Interacts with STK11 and NUAK1. Interacts wih DTL. Interacts with isoform 1 and isoform 2 of TRIM39. Interacts with PKP3; the interaction sequesters CDKN1A to the cytoplasm thereby repressing its role as an inhibitor of CDK4- and CDK6-driven RB1 phosphorylation. In terms of processing, phosphorylation of Thr-145 by Akt or of Ser-146 by PKC impairs binding to PCNA. Phosphorylation at Ser-114 by GSK3-beta enhances ubiquitination by the DCX(DTL) complex. Phosphorylation of Thr-145 by PIM2 enhances CDKN1A stability and inhibits cell proliferation. Phosphorylation of Thr-145 by PIM1 results in the relocation of CDKN1A to the cytoplasm and enhanced CDKN1A protein stability. UV radiation-induced phosphorylation at Thr-80 by LKB1 and at Ser-146 by NUAK1 leads to its degradation. Post-translationally, ubiquitinated by MKRN1; leading to polyubiquitination and 26S proteasome-dependent degradation. Ubiquitinated by the DCX(DTL) complex, also named CRL4(CDT2) complex, leading to its degradation during S phase or following UV irradiation. Ubiquitination by the DCX(DTL) complex is essential to control replication licensing and is PCNA-dependent: interacts with PCNA via its PIP-box, while the presence of the containing the 'K+4' motif in the PIP box, recruit the DCX(DTL) complex, leading to its degradation. Ubiquitination at Ser-2 leads to degradation by the proteasome pathway. Ubiquitinated by RNF114; leading to proteasomal degradation. Acetylation leads to protein stability. Acetylated in vitro on Lys-141, Lys-154, Lys-161 and Lys-163. Deacetylation by HDAC1 is prevented by competitive binding of C10orf90/FATS to HDAC1. In terms of tissue distribution, expressed in all adult tissues, with 5-fold lower levels observed in the brain.

Its subcellular location is the cytoplasm. It is found in the nucleus. In terms of biological role, plays an important role in controlling cell cycle progression and DNA damage-induced G2 arrest. Involved in p53/TP53 mediated inhibition of cellular proliferation in response to DNA damage. Also involved in p53-independent DNA damage-induced G2 arrest mediated by CREB3L1 in astrocytes and osteoblasts. Binds to and inhibits cyclin-dependent kinase activity, preventing phosphorylation of critical cyclin-dependent kinase substrates and blocking cell cycle progression. Functions in the nuclear localization and assembly of cyclin D-CDK4 complex and promotes its kinase activity towards RB1. At higher stoichiometric ratios, inhibits the kinase activity of the cyclin D-CDK4 complex. Inhibits DNA synthesis by DNA polymerase delta by competing with POLD3 for PCNA binding. Negatively regulates the CDK4- and CDK6-driven phosphorylation of RB1 in keratinocytes, thereby resulting in the release of E2F1 and subsequent transcription of E2F1-driven G1/S phase promoting genes. The protein is Cyclin-dependent kinase inhibitor 1 of Homo sapiens (Human).